Reading from the N-terminus, the 379-residue chain is Alanine racemase (379 aa).

K40 serves as the catalytic Proton acceptor; specific for D-alanine. K40 bears the N6-(pyridoxal phosphate)lysine mark. R138 contributes to the substrate binding site. Catalysis depends on Y267, which acts as the Proton acceptor; specific for L-alanine. Position 315 (M315) interacts with substrate.

This sequence belongs to the alanine racemase family. Requires pyridoxal 5'-phosphate as cofactor.

The catalysed reaction is L-alanine = D-alanine. The protein operates within amino-acid biosynthesis; D-alanine biosynthesis; D-alanine from L-alanine: step 1/1. Functionally, catalyzes the interconversion of L-alanine and D-alanine. May also act on other amino acids. The polypeptide is Alanine racemase (alr) (Halothermothrix orenii (strain H 168 / OCM 544 / DSM 9562)).